Here is a 514-residue protein sequence, read N- to C-terminus: Membrane-bound lytic murein transglycosylase F (514 aa).

Positions 1 to 30 (MLSNNPLITKFRELFTVALVLALLSGCQWQ) are cleaved as a signal peptide. The segment at 31-271 (DDNLTDLEKI…QLEEKYFGHV (241 aa)) is non-LT domain. Residues 272–514 (GSFDYVDTRA…KTIEDPGPSQ (243 aa)) are LT domain. The active site involves E316. The disordered stretch occupies residues 482–514 (PVPPRQANVDGSLNNEAAISSAEKTIEDPGPSQ). Polar residues predominate over residues 490–499 (VDGSLNNEAA).

It in the N-terminal section; belongs to the bacterial solute-binding protein 3 family. The protein in the C-terminal section; belongs to the transglycosylase Slt family.

Its subcellular location is the cell outer membrane. The catalysed reaction is Exolytic cleavage of the (1-&gt;4)-beta-glycosidic linkage between N-acetylmuramic acid (MurNAc) and N-acetylglucosamine (GlcNAc) residues in peptidoglycan, from either the reducing or the non-reducing ends of the peptidoglycan chains, with concomitant formation of a 1,6-anhydrobond in the MurNAc residue.. In terms of biological role, murein-degrading enzyme that degrades murein glycan strands and insoluble, high-molecular weight murein sacculi, with the concomitant formation of a 1,6-anhydromuramoyl product. Lytic transglycosylases (LTs) play an integral role in the metabolism of the peptidoglycan (PG) sacculus. Their lytic action creates space within the PG sacculus to allow for its expansion as well as for the insertion of various structures such as secretion systems and flagella. In Photobacterium profundum (strain SS9), this protein is Membrane-bound lytic murein transglycosylase F.